Consider the following 145-residue polypeptide: Neuromedin-S (145 aa).

Positions 1–27 (MRSEKHLPPLPLLLAICCLGTLHPSSG) are cleaved as a signal peptide. 2 consecutive propeptides follow at residues 28 to 89 (FPQS…HEIY) and 92 to 117 (FLFQ…AEYT). N136 is modified (asparagine amide). Residues 140 to 145 (VSINEH) constitute a propeptide that is removed on maturation.

This sequence belongs to the NmU family. In terms of tissue distribution, expressed by the skin glands.

The protein resides in the secreted. Functionally, stimulates uterine smooth muscle contraction. Synthetic peptide NmS-17 induces calcium mobilization in CHO cells transfected with either human FM-3/GPR66 (EC(50)=0.085 nM) or FM-4/TGR-1 (EC(50)=0.231 nM) NmU/NmS receptors. This Bombina orientalis (Oriental fire-bellied toad) protein is Neuromedin-S (nms).